The following is a 149-amino-acid chain: MADQLTEEQIAEFKEAFSLFDKDGDGTITTKELGTVMRSLGQNPTEAELQDMINEVDTDGNGTIDFPEFLTMMARKMKETDSEEEIREAFRVFDKDGNGFISAAELRHVMTNLGEKLTDEEVDEMIREADTDGDGQVNYEEFVGMMTSK.

Alanine 2 is subject to N-acetylalanine. EF-hand domains lie at 8 to 43 (EQIA…LGQN), 44 to 79 (PTEA…KMKE), 81 to 116 (DSEE…LGEK), and 117 to 149 (LTDE…MTSK). Residues aspartate 21, aspartate 23, aspartate 25, threonine 27, glutamate 32, aspartate 57, aspartate 59, asparagine 61, threonine 63, glutamate 68, aspartate 94, aspartate 96, asparagine 98, and glutamate 105 each coordinate Ca(2+). An N6,N6,N6-trimethyllysine modification is found at lysine 116. Ca(2+) is bound by residues aspartate 130, aspartate 132, aspartate 134, glutamine 136, and glutamate 141.

Belongs to the calmodulin family.

Calmodulin mediates the control of a large number of enzymes, ion channels and other proteins by Ca(2+). Among the enzymes to be stimulated by the calmodulin-Ca(2+) complex are a number of protein kinases and phosphatases. This is Calmodulin from Suberites domuncula (Sponge).